The primary structure comprises 397 residues: NADH-quinone oxidoreductase subunit D (397 aa).

Belongs to the complex I 49 kDa subunit family. As to quaternary structure, NDH-1 is composed of 14 different subunits. Subunits NuoB, C, D, E, F, and G constitute the peripheral sector of the complex.

Its subcellular location is the cell inner membrane. The enzyme catalyses a quinone + NADH + 5 H(+)(in) = a quinol + NAD(+) + 4 H(+)(out). In terms of biological role, NDH-1 shuttles electrons from NADH, via FMN and iron-sulfur (Fe-S) centers, to quinones in the respiratory chain. The immediate electron acceptor for the enzyme in this species is believed to be ubiquinone. Couples the redox reaction to proton translocation (for every two electrons transferred, four hydrogen ions are translocated across the cytoplasmic membrane), and thus conserves the redox energy in a proton gradient. This Magnetococcus marinus (strain ATCC BAA-1437 / JCM 17883 / MC-1) protein is NADH-quinone oxidoreductase subunit D.